We begin with the raw amino-acid sequence, 464 residues long: Cysteine--tRNA ligase (464 aa).

Cysteine 29 serves as a coordination point for Zn(2+). The short motif at 31-41 (ATVQGVPHIGH) is the 'HIGH' region element. The tract at residues 160–180 (RLDEVQQGESTASGKRDPRDF) is disordered. Zn(2+) contacts are provided by cysteine 208, histidine 233, and glutamate 237. A 'KMSKS' region motif is present at residues 264–268 (KMSKS). Lysine 267 provides a ligand contact to ATP.

The protein belongs to the class-I aminoacyl-tRNA synthetase family. As to quaternary structure, monomer. Zn(2+) is required as a cofactor.

It localises to the cytoplasm. The catalysed reaction is tRNA(Cys) + L-cysteine + ATP = L-cysteinyl-tRNA(Cys) + AMP + diphosphate. In Saccharopolyspora erythraea (strain ATCC 11635 / DSM 40517 / JCM 4748 / NBRC 13426 / NCIMB 8594 / NRRL 2338), this protein is Cysteine--tRNA ligase.